The primary structure comprises 462 residues: 3-isopropylmalate dehydratase large subunit (462 aa).

[4Fe-4S] cluster-binding residues include Cys337, Cys397, and Cys400.

Belongs to the aconitase/IPM isomerase family. LeuC type 1 subfamily. In terms of assembly, heterodimer of LeuC and LeuD. [4Fe-4S] cluster serves as cofactor.

It catalyses the reaction (2R,3S)-3-isopropylmalate = (2S)-2-isopropylmalate. It participates in amino-acid biosynthesis; L-leucine biosynthesis; L-leucine from 3-methyl-2-oxobutanoate: step 2/4. Catalyzes the isomerization between 2-isopropylmalate and 3-isopropylmalate, via the formation of 2-isopropylmaleate. The chain is 3-isopropylmalate dehydratase large subunit from Listeria welshimeri serovar 6b (strain ATCC 35897 / DSM 20650 / CCUG 15529 / CIP 8149 / NCTC 11857 / SLCC 5334 / V8).